The following is a 632-amino-acid chain: 1-deoxy-D-xylulose-5-phosphate synthase (632 aa).

Thiamine diphosphate is bound by residues His-75 and 117–119 (GHA). Residue Asp-146 coordinates Mg(2+). Thiamine diphosphate contacts are provided by residues 147–148 (AA), Asn-175, and Glu-370. Residue Asn-175 coordinates Mg(2+).

The protein belongs to the transketolase family. DXPS subfamily. As to quaternary structure, homodimer. The cofactor is Mg(2+). Requires thiamine diphosphate as cofactor.

It catalyses the reaction D-glyceraldehyde 3-phosphate + pyruvate + H(+) = 1-deoxy-D-xylulose 5-phosphate + CO2. The protein operates within metabolic intermediate biosynthesis; 1-deoxy-D-xylulose 5-phosphate biosynthesis; 1-deoxy-D-xylulose 5-phosphate from D-glyceraldehyde 3-phosphate and pyruvate: step 1/1. Functionally, catalyzes the acyloin condensation reaction between C atoms 2 and 3 of pyruvate and glyceraldehyde 3-phosphate to yield 1-deoxy-D-xylulose-5-phosphate (DXP). This Chlamydia muridarum (strain MoPn / Nigg) protein is 1-deoxy-D-xylulose-5-phosphate synthase.